The following is a 411-amino-acid chain: Multifunctional CCA protein (411 aa).

Residues Gly8 and Arg11 each coordinate ATP. CTP is bound by residues Gly8 and Arg11. Positions 21 and 23 each coordinate Mg(2+). ATP contacts are provided by Arg91, Arg137, and Arg140. Residues Arg91, Arg137, and Arg140 each contribute to the CTP site. The 102-residue stretch at 226-327 folds into the HD domain; sequence TGVHVMLVID…LRFLQETDAL (102 aa).

Belongs to the tRNA nucleotidyltransferase/poly(A) polymerase family. Bacterial CCA-adding enzyme type 1 subfamily. In terms of assembly, monomer. Can also form homodimers and oligomers. Requires Mg(2+) as cofactor. Ni(2+) serves as cofactor.

The catalysed reaction is a tRNA precursor + 2 CTP + ATP = a tRNA with a 3' CCA end + 3 diphosphate. It catalyses the reaction a tRNA with a 3' CCA end + 2 CTP + ATP = a tRNA with a 3' CCACCA end + 3 diphosphate. In terms of biological role, catalyzes the addition and repair of the essential 3'-terminal CCA sequence in tRNAs without using a nucleic acid template. Adds these three nucleotides in the order of C, C, and A to the tRNA nucleotide-73, using CTP and ATP as substrates and producing inorganic pyrophosphate. tRNA 3'-terminal CCA addition is required both for tRNA processing and repair. Also involved in tRNA surveillance by mediating tandem CCA addition to generate a CCACCA at the 3' terminus of unstable tRNAs. While stable tRNAs receive only 3'-terminal CCA, unstable tRNAs are marked with CCACCA and rapidly degraded. This chain is Multifunctional CCA protein, found in Methylobacillus flagellatus (strain ATCC 51484 / DSM 6875 / VKM B-1610 / KT).